A 657-amino-acid chain; its full sequence is 1-deoxy-D-xylulose-5-phosphate synthase (657 aa).

Residues histidine 73 and 113-115 (SHA) contribute to the thiamine diphosphate site. Aspartate 145 is a Mg(2+) binding site. Residues 146–147 (GA), asparagine 175, tyrosine 293, and glutamate 375 contribute to the thiamine diphosphate site. Residue asparagine 175 coordinates Mg(2+).

This sequence belongs to the transketolase family. DXPS subfamily. In terms of assembly, homodimer. Mg(2+) serves as cofactor. Thiamine diphosphate is required as a cofactor.

The enzyme catalyses D-glyceraldehyde 3-phosphate + pyruvate + H(+) = 1-deoxy-D-xylulose 5-phosphate + CO2. It functions in the pathway metabolic intermediate biosynthesis; 1-deoxy-D-xylulose 5-phosphate biosynthesis; 1-deoxy-D-xylulose 5-phosphate from D-glyceraldehyde 3-phosphate and pyruvate: step 1/1. In terms of biological role, catalyzes the acyloin condensation reaction between C atoms 2 and 3 of pyruvate and glyceraldehyde 3-phosphate to yield 1-deoxy-D-xylulose-5-phosphate (DXP). The protein is 1-deoxy-D-xylulose-5-phosphate synthase of Pseudarthrobacter chlorophenolicus (strain ATCC 700700 / DSM 12829 / CIP 107037 / JCM 12360 / KCTC 9906 / NCIMB 13794 / A6) (Arthrobacter chlorophenolicus).